Here is a 347-residue protein sequence, read N- to C-terminus: NADH-quinone oxidoreductase subunit H (347 aa).

The next 9 helical transmembrane spans lie at 13–33 (LIIALKSVVLLVVLLIVVAYL), 50–70 (PNVVGPWGLFQAFADLLKFVF), 82–102 (GVFLLAPFISAVLAMATWAVI), 115–135 (VGILYIFAISSLEVYGVIMGG), 161–181 (IGFVIVTVLLTVGSLNLTDIV), 198–218 (FLDWNWLCLFPMFVVFFISAL), 248–268 (FLLFFLGEYVAITLMCALMTV), 286–306 (VPGIIWFMLKLCFCFFLFAMV), and 325–345 (VFLPISLFMVVATATFLKVFG).

The protein belongs to the complex I subunit 1 family. As to quaternary structure, NDH-1 is composed of 14 different subunits. Subunits NuoA, H, J, K, L, M, N constitute the membrane sector of the complex.

It localises to the cell inner membrane. It catalyses the reaction a quinone + NADH + 5 H(+)(in) = a quinol + NAD(+) + 4 H(+)(out). NDH-1 shuttles electrons from NADH, via FMN and iron-sulfur (Fe-S) centers, to quinones in the respiratory chain. The immediate electron acceptor for the enzyme in this species is believed to be ubiquinone. Couples the redox reaction to proton translocation (for every two electrons transferred, four hydrogen ions are translocated across the cytoplasmic membrane), and thus conserves the redox energy in a proton gradient. This subunit may bind ubiquinone. This chain is NADH-quinone oxidoreductase subunit H, found in Brucella abortus (strain 2308).